The chain runs to 373 residues: MTQPIVRSIPLHVVSNDHPSSSPLQPGVKQSGEDKIGRSPVQFADVPVLRKPSWIRVRIPSGNAVQSLKAKLRENRLVTVCEEAACPNIHECFSHGTATFMILGEVCTRRCSFCDVAHGRPKPPDPEEPISLARTVAEMGLKYVVVTSVDRDDLRDGGAQHFVDCIAAIRQSAPQTRIEILTPDFRGKGRMDRALDILAACPPDVFNHNVETVPALYPNVRPGADYQWSLTLLKRFKAQHPQVPTKSGIMLGLGETLDQVQATLRDLRAHDVDMVTIGQYLQPTSHHHPVLRYWTPDEYKALEEYGMALGFSHVASGPMVRSSYHADHQAKEAGLGFNATVSLGSPAVSSTEHRERHTIASKSASKTESIRHR.

A disordered region spans residues 12 to 36 (HVVSNDHPSSSPLQPGVKQSGEDKI). The [4Fe-4S] cluster site is built by Cys-81, Cys-86, Cys-92, Cys-107, Cys-111, Cys-114, and Ser-323. In terms of domain architecture, Radical SAM core spans 93–312 (FSHGTATFMI…EEYGMALGFS (220 aa)). The tract at residues 346–373 (PAVSSTEHRERHTIASKSASKTESIRHR) is disordered.

This sequence belongs to the radical SAM superfamily. Lipoyl synthase family. It depends on [4Fe-4S] cluster as a cofactor.

It localises to the cytoplasm. The catalysed reaction is [[Fe-S] cluster scaffold protein carrying a second [4Fe-4S](2+) cluster] + N(6)-octanoyl-L-lysyl-[protein] + 2 oxidized [2Fe-2S]-[ferredoxin] + 2 S-adenosyl-L-methionine + 4 H(+) = [[Fe-S] cluster scaffold protein] + N(6)-[(R)-dihydrolipoyl]-L-lysyl-[protein] + 4 Fe(3+) + 2 hydrogen sulfide + 2 5'-deoxyadenosine + 2 L-methionine + 2 reduced [2Fe-2S]-[ferredoxin]. Its pathway is protein modification; protein lipoylation via endogenous pathway; protein N(6)-(lipoyl)lysine from octanoyl-[acyl-carrier-protein]: step 2/2. Its function is as follows. Catalyzes the radical-mediated insertion of two sulfur atoms into the C-6 and C-8 positions of the octanoyl moiety bound to the lipoyl domains of lipoate-dependent enzymes, thereby converting the octanoylated domains into lipoylated derivatives. The chain is Lipoyl synthase from Xylella fastidiosa (strain 9a5c).